The primary structure comprises 60 residues: MAVPARRTSKAKKNKRRTHYKVTAPSVNFDETTGDYSRSHRVSLKGYYKGRKITKAASAE.

The protein belongs to the bacterial ribosomal protein bL32 family.

The chain is Large ribosomal subunit protein bL32 from Streptococcus pneumoniae serotype 4 (strain ATCC BAA-334 / TIGR4).